A 255-amino-acid polypeptide reads, in one-letter code: 5'-nucleotidase SurE (255 aa).

Residues Asp-8, Asp-9, Ser-40, and Asn-92 each coordinate a divalent metal cation.

Belongs to the SurE nucleotidase family. A divalent metal cation is required as a cofactor.

The protein localises to the cytoplasm. The catalysed reaction is a ribonucleoside 5'-phosphate + H2O = a ribonucleoside + phosphate. In terms of biological role, nucleotidase that shows phosphatase activity on nucleoside 5'-monophosphates. The polypeptide is 5'-nucleotidase SurE (Brucella abortus (strain S19)).